The following is a 148-amino-acid chain: Large ribosomal subunit protein bL9 (148 aa).

Belongs to the bacterial ribosomal protein bL9 family.

Binds to the 23S rRNA. In Pelotomaculum thermopropionicum (strain DSM 13744 / JCM 10971 / SI), this protein is Large ribosomal subunit protein bL9.